The chain runs to 433 residues: Histidinol dehydrogenase (433 aa).

Residues tyrosine 133, glutamine 194, and asparagine 217 each contribute to the NAD(+) site. 3 residues coordinate substrate: serine 240, glutamine 262, and histidine 265. Glutamine 262 and histidine 265 together coordinate Zn(2+). Catalysis depends on proton acceptor residues glutamate 330 and histidine 331. Residues histidine 331, aspartate 364, glutamate 418, and histidine 423 each contribute to the substrate site. Residue aspartate 364 participates in Zn(2+) binding. Histidine 423 contributes to the Zn(2+) binding site.

Belongs to the histidinol dehydrogenase family. Requires Zn(2+) as cofactor.

It carries out the reaction L-histidinol + 2 NAD(+) + H2O = L-histidine + 2 NADH + 3 H(+). The protein operates within amino-acid biosynthesis; L-histidine biosynthesis; L-histidine from 5-phospho-alpha-D-ribose 1-diphosphate: step 9/9. Functionally, catalyzes the sequential NAD-dependent oxidations of L-histidinol to L-histidinaldehyde and then to L-histidine. This chain is Histidinol dehydrogenase, found in Hydrogenovibrio crunogenus (strain DSM 25203 / XCL-2) (Thiomicrospira crunogena).